We begin with the raw amino-acid sequence, 322 residues long: Ubiquinone biosynthesis O-methyltransferase, mitochondrial (322 aa).

The transit peptide at 1-37 directs the protein to the mitochondrion; sequence MLASVRVNQLQRLLLSARRLSSSPIIPPSRLLHQRLF. Residues 46–75 form a disordered region; sequence AASFSSSHPKIQTLEGKASNKSRSTSSTTS. 4 residues coordinate S-adenosyl-L-methionine: R108, G139, D160, and L205. Mg(2+) is bound by residues E206, E209, and H210.

This sequence belongs to the class I-like SAM-binding methyltransferase superfamily. UbiG/COQ3 family. Component of a multi-subunit COQ enzyme complex. Requires Mg(2+) as cofactor.

The protein resides in the mitochondrion inner membrane. The enzyme catalyses a 3,4-dihydroxy-5-(all-trans-polyprenyl)benzoate + S-adenosyl-L-methionine = a 4-hydroxy-3-methoxy-5-(all-trans-polyprenyl)benzoate + S-adenosyl-L-homocysteine + H(+). The catalysed reaction is a 3-demethylubiquinone + S-adenosyl-L-methionine = a ubiquinone + S-adenosyl-L-homocysteine. It catalyses the reaction a 3-demethylubiquinol + S-adenosyl-L-methionine = a ubiquinol + S-adenosyl-L-homocysteine + H(+). The protein operates within cofactor biosynthesis; ubiquinone biosynthesis. Its function is as follows. O-methyltransferase required for two non-consecutive steps during ubiquinone biosynthesis. Catalyzes the 2 O-methylation of 3,4-dihydroxy-5-(all-trans-polyprenyl)benzoic acid into 4-hydroxy-3-methoxy-5-(all-trans-polyprenyl)benzoic acid. Also catalyzes the last step of ubiquinone biosynthesis by mediating methylation of 3-demethylubiquinone into ubiquinone. Also able to mediate the methylation of 3-demethylubiquinol into ubiquinol. This is Ubiquinone biosynthesis O-methyltransferase, mitochondrial from Arabidopsis thaliana (Mouse-ear cress).